We begin with the raw amino-acid sequence, 181 residues long: Inner membrane-spanning protein YciB (181 aa).

Helical transmembrane passes span leucine 10–isoleucine 30, methionine 50–aspartate 70, isoleucine 80–isoleucine 100, tryptophan 120–leucine 140, and phenylalanine 148–isoleucine 168.

This sequence belongs to the YciB family.

It localises to the cell inner membrane. Plays a role in cell envelope biogenesis, maintenance of cell envelope integrity and membrane homeostasis. This Vibrio cholerae serotype O1 (strain ATCC 39315 / El Tor Inaba N16961) protein is Inner membrane-spanning protein YciB.